The sequence spans 125 residues: Ribonuclease P protein component (125 aa).

It belongs to the RnpA family. Consists of a catalytic RNA component (M1 or rnpB) and a protein subunit.

It catalyses the reaction Endonucleolytic cleavage of RNA, removing 5'-extranucleotides from tRNA precursor.. In terms of biological role, RNaseP catalyzes the removal of the 5'-leader sequence from pre-tRNA to produce the mature 5'-terminus. It can also cleave other RNA substrates such as 4.5S RNA. The protein component plays an auxiliary but essential role in vivo by binding to the 5'-leader sequence and broadening the substrate specificity of the ribozyme. This is Ribonuclease P protein component from Clostridium botulinum (strain Alaska E43 / Type E3).